We begin with the raw amino-acid sequence, 269 residues long: 4-hydroxy-tetrahydrodipicolinate reductase (269 aa).

NAD(+) contacts are provided by residues 10-15, Glu-36, 99-101, and 123-126; these read GANGRM, GTT, and AANF. Catalysis depends on His-156, which acts as the Proton donor/acceptor. Residue His-157 participates in (S)-2,3,4,5-tetrahydrodipicolinate binding. Catalysis depends on Lys-160, which acts as the Proton donor. 166 to 167 lines the (S)-2,3,4,5-tetrahydrodipicolinate pocket; it reads GT.

This sequence belongs to the DapB family.

It localises to the cytoplasm. It catalyses the reaction (S)-2,3,4,5-tetrahydrodipicolinate + NAD(+) + H2O = (2S,4S)-4-hydroxy-2,3,4,5-tetrahydrodipicolinate + NADH + H(+). It carries out the reaction (S)-2,3,4,5-tetrahydrodipicolinate + NADP(+) + H2O = (2S,4S)-4-hydroxy-2,3,4,5-tetrahydrodipicolinate + NADPH + H(+). It functions in the pathway amino-acid biosynthesis; L-lysine biosynthesis via DAP pathway; (S)-tetrahydrodipicolinate from L-aspartate: step 4/4. Catalyzes the conversion of 4-hydroxy-tetrahydrodipicolinate (HTPA) to tetrahydrodipicolinate. The sequence is that of 4-hydroxy-tetrahydrodipicolinate reductase from Neisseria gonorrhoeae (strain ATCC 700825 / FA 1090).